Reading from the N-terminus, the 196-residue chain is Protein LSM12 homolog B (196 aa).

In terms of domain architecture, Sm spans 3 to 70 (APGPGEYFSV…LAYVSEVDII (68 aa)). In terms of domain architecture, AD spans 81 to 175 (ASLNFNKLVN…IVEKHFRDVE (95 aa)).

This sequence belongs to the LSM12 family.

This is Protein LSM12 homolog B (lsm12b) from Danio rerio (Zebrafish).